Consider the following 202-residue polypeptide: Ion-translocating oxidoreductase complex subunit G (202 aa).

Residues 11–31 (AILLALIALICTALSTGIYLL) traverse the membrane as a helical segment. Position 177 is an FMN phosphoryl threonine (T177).

It belongs to the RnfG family. As to quaternary structure, the complex is composed of six subunits: RnfA, RnfB, RnfC, RnfD, RnfE and RnfG. It depends on FMN as a cofactor.

The protein localises to the cell inner membrane. Part of a membrane-bound complex that couples electron transfer with translocation of ions across the membrane. The chain is Ion-translocating oxidoreductase complex subunit G from Pasteurella multocida (strain Pm70).